An 829-amino-acid polypeptide reads, in one-letter code: Leucine--tRNA ligase (829 aa).

Residues 34-44 (PYPSGNIHMGH) carry the 'HIGH' region motif. The short motif at 591–595 (KMSKS) is the 'KMSKS' region element. K594 contacts ATP.

It belongs to the class-I aminoacyl-tRNA synthetase family.

The protein localises to the cytoplasm. It carries out the reaction tRNA(Leu) + L-leucine + ATP = L-leucyl-tRNA(Leu) + AMP + diphosphate. This Ehrlichia canis (strain Jake) protein is Leucine--tRNA ligase.